Reading from the N-terminus, the 242-residue chain is Caffeoyl-CoA O-methyltransferase 3 (242 aa).

K16 serves as a coordination point for substrate. S-adenosyl-L-methionine is bound by residues T58, E80, 82-83 (GV), S88, D106, and A135. D158 is a binding site for substrate. D158 lines the a divalent metal cation pocket. D160 lines the S-adenosyl-L-methionine pocket. The a divalent metal cation site is built by D184 and N185. Residue N189 coordinates substrate.

It belongs to the class I-like SAM-binding methyltransferase superfamily. Cation-dependent O-methyltransferase family. CCoAMT subfamily. The cofactor is Mg(2+). Mostly expressed in the bottom and middle parts of the stems.

It catalyses the reaction (E)-caffeoyl-CoA + S-adenosyl-L-methionine = (E)-feruloyl-CoA + S-adenosyl-L-homocysteine + H(+). Its pathway is aromatic compound metabolism; phenylpropanoid biosynthesis. Functionally, methylates caffeoyl-CoA to feruloyl-CoA and 5-hydroxyferuloyl-CoA to sinapoyl-CoA. Plays a role in the synthesis of feruloylated polysaccharides. Involved in the reinforcement of the plant cell wall. Also involved in the responding to wounding or pathogen challenge by the increased formation of cell wall-bound ferulic acid polymers. Also methylates free caffeic and 5-hydroxyferulic acids. The sequence is that of Caffeoyl-CoA O-methyltransferase 3 (CCOAOMT3) from Nicotiana tabacum (Common tobacco).